The following is a 451-amino-acid chain: Bifunctional protein GlmU (451 aa).

Residues 1-225 (MVVVAILAAG…YQEILGINDR (225 aa)) are pyrophosphorylase. UDP-N-acetyl-alpha-D-glucosamine is bound by residues 7 to 10 (LAAG), Lys21, Gln72, and 77 to 78 (GT). Asp102 is a Mg(2+) binding site. 4 residues coordinate UDP-N-acetyl-alpha-D-glucosamine: Gly139, Glu154, Asn169, and Asn223. Asn223 provides a ligand contact to Mg(2+). The tract at residues 226–246 (LQLATAYEILQRRVKEQWMMA) is linker. An N-acetyltransferase region spans residues 247 to 451 (GVTLIDPNSI…LGWRRKSGES (205 aa)). The UDP-N-acetyl-alpha-D-glucosamine site is built by Arg328 and Lys346. The active-site Proton acceptor is the His358. Positions 361 and 372 each coordinate UDP-N-acetyl-alpha-D-glucosamine. Residues Ala375, 381-382 (NY), Ser400, Ala418, and Arg435 each bind acetyl-CoA.

The protein in the N-terminal section; belongs to the N-acetylglucosamine-1-phosphate uridyltransferase family. It in the C-terminal section; belongs to the transferase hexapeptide repeat family. As to quaternary structure, homotrimer. Mg(2+) is required as a cofactor.

It localises to the cytoplasm. The enzyme catalyses alpha-D-glucosamine 1-phosphate + acetyl-CoA = N-acetyl-alpha-D-glucosamine 1-phosphate + CoA + H(+). It carries out the reaction N-acetyl-alpha-D-glucosamine 1-phosphate + UTP + H(+) = UDP-N-acetyl-alpha-D-glucosamine + diphosphate. It functions in the pathway nucleotide-sugar biosynthesis; UDP-N-acetyl-alpha-D-glucosamine biosynthesis; N-acetyl-alpha-D-glucosamine 1-phosphate from alpha-D-glucosamine 6-phosphate (route II): step 2/2. Its pathway is nucleotide-sugar biosynthesis; UDP-N-acetyl-alpha-D-glucosamine biosynthesis; UDP-N-acetyl-alpha-D-glucosamine from N-acetyl-alpha-D-glucosamine 1-phosphate: step 1/1. It participates in bacterial outer membrane biogenesis; LPS lipid A biosynthesis. In terms of biological role, catalyzes the last two sequential reactions in the de novo biosynthetic pathway for UDP-N-acetylglucosamine (UDP-GlcNAc). The C-terminal domain catalyzes the transfer of acetyl group from acetyl coenzyme A to glucosamine-1-phosphate (GlcN-1-P) to produce N-acetylglucosamine-1-phosphate (GlcNAc-1-P), which is converted into UDP-GlcNAc by the transfer of uridine 5-monophosphate (from uridine 5-triphosphate), a reaction catalyzed by the N-terminal domain. The sequence is that of Bifunctional protein GlmU from Nostoc sp. (strain PCC 7120 / SAG 25.82 / UTEX 2576).